The primary structure comprises 390 residues: Trehalose-phosphate phosphatase (390 aa).

The active-site Nucleophile is aspartate 150. 3 residues coordinate Mg(2+): aspartate 150, aspartate 152, and aspartate 333. A substrate-binding site is contributed by 150 to 152; that stretch reads DFD.

The protein belongs to the trehalose phosphatase family. Requires Mg(2+) as cofactor.

The catalysed reaction is alpha,alpha-trehalose 6-phosphate + H2O = alpha,alpha-trehalose + phosphate. It participates in glycan biosynthesis; trehalose biosynthesis. In terms of biological role, removes the phosphate from trehalose 6-phosphate to produce free trehalose. The protein is Trehalose-phosphate phosphatase (otsB) of Mycobacterium ulcerans (strain Agy99).